Here is a 714-residue protein sequence, read N- to C-terminus: Penicillin-binding protein 1F (714 aa).

The Cytoplasmic portion of the chain corresponds to 1-12; the sequence is MFKIKKKKLFIP. A helical; Signal-anchor for type II membrane protein transmembrane segment spans residues 13–33; the sequence is IIILVLTAFLALIGYISIIFL. Topologically, residues 34-714 are extracellular; that stretch reads GHYVIDEKKL…DYVQPKLFSS (681 aa). The transglycosylase stretch occupies residues 49-217; it reads SKIVDQNGDE…STYSPILHPD (169 aa). The active-site Proton donor; for transglycosylase activity is the Glu-87. The segment at 297–592 is transpeptidase; sequence SKLQKTAYQV…SSYPTRLFKD (296 aa). The active-site Acyl-ester intermediate; for transpeptidase activity is Ser-359.

It in the N-terminal section; belongs to the glycosyltransferase 51 family. In the C-terminal section; belongs to the transpeptidase family.

The protein resides in the cell membrane. The catalysed reaction is [GlcNAc-(1-&gt;4)-Mur2Ac(oyl-L-Ala-gamma-D-Glu-L-Lys-D-Ala-D-Ala)](n)-di-trans,octa-cis-undecaprenyl diphosphate + beta-D-GlcNAc-(1-&gt;4)-Mur2Ac(oyl-L-Ala-gamma-D-Glu-L-Lys-D-Ala-D-Ala)-di-trans,octa-cis-undecaprenyl diphosphate = [GlcNAc-(1-&gt;4)-Mur2Ac(oyl-L-Ala-gamma-D-Glu-L-Lys-D-Ala-D-Ala)](n+1)-di-trans,octa-cis-undecaprenyl diphosphate + di-trans,octa-cis-undecaprenyl diphosphate + H(+). It carries out the reaction Preferential cleavage: (Ac)2-L-Lys-D-Ala-|-D-Ala. Also transpeptidation of peptidyl-alanyl moieties that are N-acyl substituents of D-alanine.. Its pathway is cell wall biogenesis; peptidoglycan biosynthesis. Functionally, cell wall formation. May be involved in outgrowth of the germinated spore or it could function in the synthesis of the germ cell wall. This Bacillus subtilis (strain 168) protein is Penicillin-binding protein 1F (pbpF).